Consider the following 30-residue polypeptide: Hainantoxin F7-28.42 (30 aa).

As to expression, expressed by the venom gland.

The protein resides in the secreted. This chain is Hainantoxin F7-28.42, found in Cyriopagopus hainanus (Chinese bird spider).